We begin with the raw amino-acid sequence, 434 residues long: Chaperone SurA (434 aa).

Residues 1–22 (MKPSKHLIFALFALAISQPTMA) form the signal peptide. 2 consecutive PpiC domains span residues 173–274 (DVEY…KIMD) and 283–383 (IEEV…QLEE).

The protein resides in the periplasm. The catalysed reaction is [protein]-peptidylproline (omega=180) = [protein]-peptidylproline (omega=0). Chaperone involved in the correct folding and assembly of outer membrane proteins. Recognizes specific patterns of aromatic residues and the orientation of their side chains, which are found more frequently in integral outer membrane proteins. May act in both early periplasmic and late outer membrane-associated steps of protein maturation. The polypeptide is Chaperone SurA (Shewanella oneidensis (strain ATCC 700550 / JCM 31522 / CIP 106686 / LMG 19005 / NCIMB 14063 / MR-1)).